The chain runs to 272 residues: Glutamate racemase (272 aa).

Substrate contacts are provided by residues 10 to 11 (DS) and 42 to 43 (YG). The active-site Proton donor/acceptor is the Cys73. Residue 74–75 (NT) coordinates substrate. Cys183 serves as the catalytic Proton donor/acceptor. 184 to 185 (TH) contributes to the substrate binding site.

This sequence belongs to the aspartate/glutamate racemases family.

It catalyses the reaction L-glutamate = D-glutamate. It functions in the pathway cell wall biogenesis; peptidoglycan biosynthesis. Functionally, provides the (R)-glutamate required for cell wall biosynthesis. The sequence is that of Glutamate racemase from Leifsonia xyli subsp. xyli (strain CTCB07).